The chain runs to 230 residues: Flagellar L-ring protein (230 aa).

The N-terminal stretch at 1–15 (MSRLPSLSRLCLAIA) is a signal peptide. C16 carries the N-palmitoyl cysteine lipid modification. C16 is lipidated: S-diacylglycerol cysteine.

It belongs to the FlgH family. In terms of assembly, the basal body constitutes a major portion of the flagellar organelle and consists of four rings (L,P,S, and M) mounted on a central rod.

It is found in the cell outer membrane. Its subcellular location is the bacterial flagellum basal body. Assembles around the rod to form the L-ring and probably protects the motor/basal body from shearing forces during rotation. In Xanthomonas euvesicatoria pv. vesicatoria (strain 85-10) (Xanthomonas campestris pv. vesicatoria), this protein is Flagellar L-ring protein.